We begin with the raw amino-acid sequence, 145 residues long: Large ribosomal subunit protein uL16 (145 aa).

It belongs to the universal ribosomal protein uL16 family. As to quaternary structure, part of the 50S ribosomal subunit.

In terms of biological role, binds 23S rRNA and is also seen to make contacts with the A and possibly P site tRNAs. The sequence is that of Large ribosomal subunit protein uL16 from Exiguobacterium sibiricum (strain DSM 17290 / CCUG 55495 / CIP 109462 / JCM 13490 / 255-15).